The following is a 395-amino-acid chain: G-protein coupled receptor 182 (395 aa).

Residues Met-1 to Phe-53 lie on the Extracellular side of the membrane. Residues Asn-24 and Asn-33 are each glycosylated (N-linked (GlcNAc...) asparagine). The helical transmembrane segment at Val-54–Cys-75 threads the bilayer. The Cytoplasmic segment spans residues Arg-76–Leu-86. The helical transmembrane segment at Tyr-87 to Val-109 threads the bilayer. The Extracellular segment spans residues Met-110–Arg-123. Cysteines 122 and 198 form a disulfide. The helical transmembrane segment at Phe-124 to Ile-145 threads the bilayer. The Cytoplasmic portion of the chain corresponds to Asp-146–Arg-166. Residues Arg-167–Gln-189 form a helical membrane-spanning segment. The Extracellular segment spans residues Leu-190–Ala-213. Residues Val-214 to Ile-235 form a helical membrane-spanning segment. Residues Leu-236–Leu-254 are Cytoplasmic-facing. Residues Leu-255–Leu-276 traverse the membrane as a helical segment. Residues Leu-277 to Tyr-295 lie on the Extracellular side of the membrane. The helical transmembrane segment at Phe-296–Tyr-316 threads the bilayer. Residues Asn-317 to Pro-395 are Cytoplasmic-facing. Residue Ser-329 is modified to Phosphoserine.

The protein belongs to the G-protein coupled receptor 1 family. Expressed in a wide variety of peripheral tissues in the adult rat with prominent expression in lung, testis, adrenal and liver.

Its subcellular location is the cell membrane. Functionally, orphan receptor. The polypeptide is G-protein coupled receptor 182 (Gpr182) (Rattus norvegicus (Rat)).